The following is a 396-amino-acid chain: MSTDQMTQLDESQIETNYDKVVYEFDDMNLNEKLLRGVFGYGFNKPSAIQQRAIMPIIEGNDVLAQAQSGTGKTGTFSIAALQRIDPAIKAPQALMLAPTRELALQIQKVVMALGFHMDIKVHACIGGTSFVEDAEGLRDAQIVVGTPGRVFDNIQRRKFKVDNIKMFILDEADEMLSTGFKEQIYQIFTMLPPTTQVVLLSATMPRDVLEVTAKFMQNPVRILVKKDELTLEGIKQFYVNVEEEQFKYDCLTDLYDSISVTQAVIFCNTRRKVEELTQRLTADNFTVSSIYSDLPQQERDTIMKEFRSGSSRILISTDLLARGIDVQQVSLVINYDLPTNKENYIHRIGRGGRFGRKGVAINFIVNEDVQALRELEQFYSTQIEELPSDIGTLFT.

Positions 23-51 match the Q motif motif; that stretch reads YEFDDMNLNEKLLRGVFGYGFNKPSAIQQ. The region spanning 54–223 is the Helicase ATP-binding domain; that stretch reads IMPIIEGNDV…AKFMQNPVRI (170 aa). 67–74 lines the ATP pocket; it reads AQSGTGKT. A DEAD box motif is present at residues 171 to 174; the sequence is DEAD. Residues 234–395 form the Helicase C-terminal domain; that stretch reads GIKQFYVNVE…ELPSDIGTLF (162 aa).

It belongs to the DEAD box helicase family. eIF4A subfamily. Component of the eIF4F complex, which composition varies with external and internal environmental conditions. It is composed of at least eIF4A, eIF4E and eIF4G.

Its subcellular location is the cytoplasm. The enzyme catalyses ATP + H2O = ADP + phosphate + H(+). ATP-dependent RNA helicase which is a subunit of the eIF4F complex involved in cap recognition and is required for mRNA binding to ribosome. In the current model of translation initiation, eIF4A unwinds RNA secondary structures in the 5'-UTR of mRNAs which is necessary to allow efficient binding of the small ribosomal subunit, and subsequent scanning for the initiator codon. In Candida glabrata (strain ATCC 2001 / BCRC 20586 / JCM 3761 / NBRC 0622 / NRRL Y-65 / CBS 138) (Yeast), this protein is ATP-dependent RNA helicase eIF4A (TIF1).